The sequence spans 618 residues: DNA mismatch repair protein MutL (618 aa).

The segment at 367 to 402 is disordered; sequence EPTTAREPATPRYSGGASGGNGGRQTAGGWPHAQPG. A compositionally biased stretch (gly residues) spans 382–392; the sequence is GASGGNGGRQT.

Belongs to the DNA mismatch repair MutL/HexB family.

This protein is involved in the repair of mismatches in DNA. It is required for dam-dependent methyl-directed DNA mismatch repair. May act as a 'molecular matchmaker', a protein that promotes the formation of a stable complex between two or more DNA-binding proteins in an ATP-dependent manner without itself being part of a final effector complex. The polypeptide is DNA mismatch repair protein MutL (Salmonella paratyphi A (strain ATCC 9150 / SARB42)).